Reading from the N-terminus, the 347-residue chain is Probable dual-specificity RNA methyltransferase RlmN (347 aa).

E93 functions as the Proton acceptor in the catalytic mechanism. The 235-residue stretch at 99–333 (TEKRLTACLS…VSLRKSRGLD (235 aa)) folds into the Radical SAM core domain. An intrachain disulfide couples C106 to C338. Residues C113, C117, and C120 each contribute to the [4Fe-4S] cluster site. S-adenosyl-L-methionine is bound by residues 160 to 161 (GE), S190, 219 to 221 (SLH), and N295. The S-methylcysteine intermediate role is filled by C338.

Belongs to the radical SAM superfamily. RlmN family. Requires [4Fe-4S] cluster as cofactor.

It localises to the cytoplasm. It catalyses the reaction adenosine(2503) in 23S rRNA + 2 reduced [2Fe-2S]-[ferredoxin] + 2 S-adenosyl-L-methionine = 2-methyladenosine(2503) in 23S rRNA + 5'-deoxyadenosine + L-methionine + 2 oxidized [2Fe-2S]-[ferredoxin] + S-adenosyl-L-homocysteine. It carries out the reaction adenosine(37) in tRNA + 2 reduced [2Fe-2S]-[ferredoxin] + 2 S-adenosyl-L-methionine = 2-methyladenosine(37) in tRNA + 5'-deoxyadenosine + L-methionine + 2 oxidized [2Fe-2S]-[ferredoxin] + S-adenosyl-L-homocysteine. Functionally, specifically methylates position 2 of adenine 2503 in 23S rRNA and position 2 of adenine 37 in tRNAs. The polypeptide is Probable dual-specificity RNA methyltransferase RlmN (Prochlorococcus marinus (strain MIT 9301)).